The primary structure comprises 205 residues: Urease accessory protein UreE (205 aa).

The span at 171–192 (HHGHSHSHDHDHDHDHDHDHQH) shows a compositional bias: basic and acidic residues. Residues 171–205 (HHGHSHSHDHDHDHDHDHDHQHGPCCSHGHHHGHR) are disordered.

The protein belongs to the UreE family.

It is found in the cytoplasm. In terms of biological role, involved in urease metallocenter assembly. Binds nickel. Probably functions as a nickel donor during metallocenter assembly. In Burkholderia pseudomallei (strain K96243), this protein is Urease accessory protein UreE.